Here is a 357-residue protein sequence, read N- to C-terminus: Putative minor fimbrial subunit PmfE (357 aa).

An N-terminal signal peptide occupies residues 1–28 (MILNKKNIHSKSVMLFCAGIVSLMPLHA).

It is found in the fimbrium. The chain is Putative minor fimbrial subunit PmfE (pmfE) from Proteus mirabilis (strain HI4320).